A 368-amino-acid chain; its full sequence is Quinolinate synthase (368 aa).

Positions 46 and 63 each coordinate iminosuccinate. Cys110 contacts [4Fe-4S] cluster. Residues 141-143 and Ser162 contribute to the iminosuccinate site; that span reads YVN. [4Fe-4S] cluster is bound at residue Cys230. Iminosuccinate is bound by residues 256–258 and Thr273; that span reads HPE. Cys320 is a [4Fe-4S] cluster binding site.

Belongs to the quinolinate synthase family. Type 3 subfamily. The cofactor is [4Fe-4S] cluster.

Its subcellular location is the cytoplasm. It carries out the reaction iminosuccinate + dihydroxyacetone phosphate = quinolinate + phosphate + 2 H2O + H(+). It functions in the pathway cofactor biosynthesis; NAD(+) biosynthesis; quinolinate from iminoaspartate: step 1/1. In terms of biological role, catalyzes the condensation of iminoaspartate with dihydroxyacetone phosphate to form quinolinate. The polypeptide is Quinolinate synthase (Bacillus thuringiensis (strain Al Hakam)).